Consider the following 548-residue polypeptide: Chaperonin GroEL 3 (548 aa).

ATP-binding positions include threonine 30–proline 33, lysine 51, aspartate 87–threonine 91, glycine 415, and aspartate 496.

The protein belongs to the chaperonin (HSP60) family. Forms a cylinder of 14 subunits composed of two heptameric rings stacked back-to-back. Interacts with the co-chaperonin GroES.

The protein localises to the cytoplasm. The catalysed reaction is ATP + H2O + a folded polypeptide = ADP + phosphate + an unfolded polypeptide.. Together with its co-chaperonin GroES, plays an essential role in assisting protein folding. The GroEL-GroES system forms a nano-cage that allows encapsulation of the non-native substrate proteins and provides a physical environment optimized to promote and accelerate protein folding. The protein is Chaperonin GroEL 3 of Nitrobacter winogradskyi (strain ATCC 25391 / DSM 10237 / CIP 104748 / NCIMB 11846 / Nb-255).